The chain runs to 259 residues: Ribose-5-phosphate isomerase (259 aa).

Belongs to the ribose 5-phosphate isomerase family.

The protein resides in the cytoplasm. The enzyme catalyses aldehydo-D-ribose 5-phosphate = D-ribulose 5-phosphate. It functions in the pathway carbohydrate degradation; pentose phosphate pathway; D-ribose 5-phosphate from D-ribulose 5-phosphate (non-oxidative stage): step 1/1. This chain is Ribose-5-phosphate isomerase (RKI1), found in Vanderwaltozyma polyspora (strain ATCC 22028 / DSM 70294 / BCRC 21397 / CBS 2163 / NBRC 10782 / NRRL Y-8283 / UCD 57-17) (Kluyveromyces polysporus).